An 81-amino-acid chain; its full sequence is ATP synthase subunit c, chloroplastic (81 aa).

A run of 2 helical transmembrane segments spans residues 3–23 (PLIS…ASIG) and 53–73 (LLLS…VALA).

The protein belongs to the ATPase C chain family. As to quaternary structure, F-type ATPases have 2 components, F(1) - the catalytic core - and F(0) - the membrane proton channel. F(1) has five subunits: alpha(3), beta(3), gamma(1), delta(1), epsilon(1). F(0) has four main subunits: a(1), b(1), b'(1) and c(10-14). The alpha and beta chains form an alternating ring which encloses part of the gamma chain. F(1) is attached to F(0) by a central stalk formed by the gamma and epsilon chains, while a peripheral stalk is formed by the delta, b and b' chains.

It is found in the plastid. Its subcellular location is the chloroplast thylakoid membrane. Functionally, f(1)F(0) ATP synthase produces ATP from ADP in the presence of a proton or sodium gradient. F-type ATPases consist of two structural domains, F(1) containing the extramembraneous catalytic core and F(0) containing the membrane proton channel, linked together by a central stalk and a peripheral stalk. During catalysis, ATP synthesis in the catalytic domain of F(1) is coupled via a rotary mechanism of the central stalk subunits to proton translocation. Key component of the F(0) channel; it plays a direct role in translocation across the membrane. A homomeric c-ring of between 10-14 subunits forms the central stalk rotor element with the F(1) delta and epsilon subunits. The chain is ATP synthase subunit c, chloroplastic from Angiopteris evecta (Mule's foot fern).